Reading from the N-terminus, the 1505-residue chain is Phosphatidylinositol 3-kinase C2 domain-containing subunit gamma (1505 aa).

The tract at residues 1 to 32 (MAYNWQTEPNRAEPQEGGHDHQQCHHADQHLS) is disordered. Over residues 10–31 (NRAEPQEGGHDHQQCHHADQHL) the composition is skewed to basic and acidic residues. The PI3K-RBD domain maps to 278 to 370 (PSRLFADTQF…IQLHLQRSRD (93 aa)). Residues 540 to 688 (LHSHLSFTVC…TPLTLQIDFP (149 aa)) form the C2 PI3K-type domain. Residues 703-879 (RTDHQEPPRE…QELLAALQFC (177 aa)) enclose the PIK helical domain. The 279-residue stretch at 948–1226 (DRDACSYFTS…KIKQSLECFP (279 aa)) folds into the PI3K/PI4K catalytic domain. The segment at 954–960 (YFTSNAL) is G-loop. The tract at residues 1090–1098 (GVCDRHNDN) is catalytic loop. Positions 1109-1135 (HIDFGKFLGHAQTFGGIKRDRAPFIFT) are activation loop. Residues 1259–1371 (LNKTRTIQRV…SFFLSEHIQQ (113 aa)) form the PX domain. The C2 domain occupies 1384–1505 (HSPDKSPQVQ…KWYPLGNSII (122 aa)).

Belongs to the PI3/PI4-kinase family. As to expression, predominantly expressed in normal liver. High levels also found in regenerating liver. Very low levels found in heart and testis.

Its subcellular location is the membrane. It carries out the reaction a 1,2-diacyl-sn-glycero-3-phospho-(1D-myo-inositol) + ATP = a 1,2-diacyl-sn-glycero-3-phospho-(1D-myo-inositol-3-phosphate) + ADP + H(+). The catalysed reaction is a 1,2-diacyl-sn-glycero-3-phospho-(1D-myo-inositol 4-phosphate) + ATP = a 1,2-diacyl-sn-glycero-3-phospho-(1D-myo-inositol-3,4-bisphosphate) + ADP + H(+). Functionally, generates phosphatidylinositol 3-phosphate (PtdIns3P) and phosphatidylinositol 3,4-bisphosphate (PtdIns(3,4)P2) that act as second messengers. May play a role in SDF1A-stimulated chemotaxis. The protein is Phosphatidylinositol 3-kinase C2 domain-containing subunit gamma (Pik3c2g) of Rattus norvegicus (Rat).